Consider the following 489-residue polypeptide: Corticosteroid-binding protein (489 aa).

It to yeast FMS1.

May be a flavoprotein with enzymatic activity. In Candida albicans (strain SC5314 / ATCC MYA-2876) (Yeast), this protein is Corticosteroid-binding protein (CBP1).